An 87-amino-acid polypeptide reads, in one-letter code: Small ribosomal subunit protein bS20 (87 aa).

Belongs to the bacterial ribosomal protein bS20 family.

Its function is as follows. Binds directly to 16S ribosomal RNA. The polypeptide is Small ribosomal subunit protein bS20 (Parvibaculum lavamentivorans (strain DS-1 / DSM 13023 / NCIMB 13966)).